The chain runs to 388 residues: Arginine biosynthesis bifunctional protein ArgJ (388 aa).

Substrate-binding residues include Thr-150, Lys-172, Thr-183, Glu-263, Asn-383, and Thr-388. Thr-183 functions as the Nucleophile in the catalytic mechanism.

The protein belongs to the ArgJ family. Heterotetramer of two alpha and two beta chains.

Its subcellular location is the cytoplasm. The enzyme catalyses N(2)-acetyl-L-ornithine + L-glutamate = N-acetyl-L-glutamate + L-ornithine. It catalyses the reaction L-glutamate + acetyl-CoA = N-acetyl-L-glutamate + CoA + H(+). Its pathway is amino-acid biosynthesis; L-arginine biosynthesis; L-ornithine and N-acetyl-L-glutamate from L-glutamate and N(2)-acetyl-L-ornithine (cyclic): step 1/1. The protein operates within amino-acid biosynthesis; L-arginine biosynthesis; N(2)-acetyl-L-ornithine from L-glutamate: step 1/4. Catalyzes two activities which are involved in the cyclic version of arginine biosynthesis: the synthesis of N-acetylglutamate from glutamate and acetyl-CoA as the acetyl donor, and of ornithine by transacetylation between N(2)-acetylornithine and glutamate. This Corynebacterium efficiens (strain DSM 44549 / YS-314 / AJ 12310 / JCM 11189 / NBRC 100395) protein is Arginine biosynthesis bifunctional protein ArgJ.